The following is a 909-amino-acid chain: Glucan endo-1,3-beta-D-glucosidase ARB_01444 (909 aa).

The signal sequence occupies residues 1 to 23; sequence MKPYTTLPGVAVLVSLLTQSAHA. The disordered stretch occupies residues 136-187; it reads KRSPAPQRHPPAPTKATAGYQFTNCTSTSNPGPTATSPTSGIPSQPSAPPAT. Residues 155–180 show a composition bias toward polar residues; the sequence is YQFTNCTSTSNPGPTATSPTSGIPSQ. Residues N159, N239, and N259 are each glycosylated (N-linked (GlcNAc...) asparagine). A beta-sandwich subdomain region spans residues 191–430; it reads QDIFQPIAKD…KGVIQVAKNP (240 aa). The 719-residue stretch at 191-909 folds into the GH81 domain; sequence QDIFQPIAKD…AGEYSTYIAL (719 aa). An alpha/beta subdomain region spans residues 431 to 524; sequence SAEEGEGIYD…GDSWTMVEGN (94 aa). The tract at residues 539 to 909 is (alpha/beta)6 barrel subdomain; it reads SSQVTLSEGA…AGEYSTYIAL (371 aa). D654 is a catalytic residue. Residues H658, D727, E729, and E733 each coordinate (1,3-beta-D-glucosyl)n. Catalysis depends on residues E729 and E733. The segment at 798-800 is may provide specificity for triple-helical beta-glucan; sequence KID. Position 811 (Y811) interacts with (1,3-beta-D-glucosyl)n.

It belongs to the glycosyl hydrolase 81 family.

Its subcellular location is the secreted. The protein localises to the cell wall. It catalyses the reaction Hydrolysis of (1-&gt;3)-beta-D-glucosidic linkages in (1-&gt;3)-beta-D-glucans.. Functionally, cleaves internal linkages in 1,3-beta-glucan. Probably involved in cell separation after cytokinesis. The sequence is that of Glucan endo-1,3-beta-D-glucosidase ARB_01444 from Arthroderma benhamiae (strain ATCC MYA-4681 / CBS 112371) (Trichophyton mentagrophytes).